Reading from the N-terminus, the 131-residue chain is UPF0102 protein YraN (131 aa).

Residues 1 to 19 are compositionally biased toward polar residues; the sequence is MATVPTRSGSPRQLTTKQT. Residues 1 to 20 are disordered; it reads MATVPTRSGSPRQLTTKQTG.

It belongs to the UPF0102 family.

The chain is UPF0102 protein YraN from Escherichia coli O8 (strain IAI1).